The primary structure comprises 315 residues: DNA-directed RNA polymerase subunit alpha (315 aa).

Residues 1-227 (MTQFQIECVE…NLFNPFKKIN (227 aa)) are alpha N-terminal domain (alpha-NTD). The interval 239–315 (EDKISQIPIE…PKRKTNKKEN (77 aa)) is alpha C-terminal domain (alpha-CTD).

Belongs to the RNA polymerase alpha chain family. In plastids the minimal PEP RNA polymerase catalytic core is composed of four subunits: alpha, beta, beta', and beta''. When a (nuclear-encoded) sigma factor is associated with the core the holoenzyme is formed, which can initiate transcription.

It is found in the plastid. The protein resides in the cyanelle. It carries out the reaction RNA(n) + a ribonucleoside 5'-triphosphate = RNA(n+1) + diphosphate. Its function is as follows. DNA-dependent RNA polymerase catalyzes the transcription of DNA into RNA using the four ribonucleoside triphosphates as substrates. The sequence is that of DNA-directed RNA polymerase subunit alpha from Cyanophora paradoxa.